A 417-amino-acid chain; its full sequence is Tyrosine--tRNA ligase (417 aa).

Tyr39 is a binding site for L-tyrosine. The 'HIGH' region motif lies at 44-53 (CTARSLHIGN). Residues Tyr176 and Gln180 each coordinate L-tyrosine. Residues 236–240 (KMGKT) carry the 'KMSKS' region motif. Residue Lys239 coordinates ATP. Residues 350 to 417 (FGVLNAFVKA…KKKHILIKPA (68 aa)) form the S4 RNA-binding domain.

This sequence belongs to the class-I aminoacyl-tRNA synthetase family. TyrS type 1 subfamily. Homodimer.

It localises to the cytoplasm. It catalyses the reaction tRNA(Tyr) + L-tyrosine + ATP = L-tyrosyl-tRNA(Tyr) + AMP + diphosphate + H(+). In terms of biological role, catalyzes the attachment of tyrosine to tRNA(Tyr) in a two-step reaction: tyrosine is first activated by ATP to form Tyr-AMP and then transferred to the acceptor end of tRNA(Tyr). In Bradyrhizobium diazoefficiens (strain JCM 10833 / BCRC 13528 / IAM 13628 / NBRC 14792 / USDA 110), this protein is Tyrosine--tRNA ligase.